Here is a 462-residue protein sequence, read N- to C-terminus: tRNA wybutosine-synthesizing protein 2 (462 aa).

S-adenosyl-L-methionine contacts are provided by residues serine 257, lysine 264, and glutamate 305–leucine 306.

The protein belongs to the class I-like SAM-binding methyltransferase superfamily. TRM5/TYW2 family.

It is found in the cytoplasm. It catalyses the reaction 4-demethylwyosine(37) in tRNA(Phe) + S-adenosyl-L-methionine = 4-demethyl-7-[(3S)-3-amino-3-carboxypropyl]wyosine(37) in tRNA(Phe) + S-methyl-5'-thioadenosine + H(+). It participates in tRNA modification; wybutosine-tRNA(Phe) biosynthesis. Its function is as follows. S-adenosyl-L-methionine-dependent transferase that acts as a component of the wybutosine biosynthesis pathway. Wybutosine is a hyper modified guanosine with a tricyclic base found at the 3'-position adjacent to the anticodon of eukaryotic phenylalanine tRNA. Catalyzes the transfer of the alpha-amino-alpha-carboxypropyl (acp) group from S-adenosyl-L-methionine to the C-7 position of 4-demethylwyosine (imG-14) to produce wybutosine-86. The protein is tRNA wybutosine-synthesizing protein 2 (TRM12) of Saccharomyces cerevisiae (strain ATCC 204508 / S288c) (Baker's yeast).